The chain runs to 361 residues: S-adenosylmethionine:tRNA ribosyltransferase-isomerase (361 aa).

The protein belongs to the QueA family. As to quaternary structure, monomer.

Its subcellular location is the cytoplasm. The catalysed reaction is 7-aminomethyl-7-carbaguanosine(34) in tRNA + S-adenosyl-L-methionine = epoxyqueuosine(34) in tRNA + adenine + L-methionine + 2 H(+). The protein operates within tRNA modification; tRNA-queuosine biosynthesis. Its function is as follows. Transfers and isomerizes the ribose moiety from AdoMet to the 7-aminomethyl group of 7-deazaguanine (preQ1-tRNA) to give epoxyqueuosine (oQ-tRNA). The sequence is that of S-adenosylmethionine:tRNA ribosyltransferase-isomerase from Actinobacillus pleuropneumoniae serotype 3 (strain JL03).